The chain runs to 248 residues: Uridylate kinase (248 aa).

ATP is bound at residue 13–16; sequence KLSG. A UMP-binding site is contributed by Gly-55. Positions 56 and 60 each coordinate ATP. Residues Asp-75 and 136–143 contribute to the UMP site; that span reads TGNPYFTT. ATP-binding residues include Thr-163, Tyr-169, and Asp-172.

This sequence belongs to the UMP kinase family. As to quaternary structure, homohexamer.

It localises to the cytoplasm. It catalyses the reaction UMP + ATP = UDP + ADP. Its pathway is pyrimidine metabolism; CTP biosynthesis via de novo pathway; UDP from UMP (UMPK route): step 1/1. With respect to regulation, inhibited by UTP. Its function is as follows. Catalyzes the reversible phosphorylation of UMP to UDP. The chain is Uridylate kinase from Leptospira interrogans serogroup Icterohaemorrhagiae serovar copenhageni (strain Fiocruz L1-130).